Reading from the N-terminus, the 203-residue chain is Thymidylate kinase (203 aa).

ATP is bound at residue 9-16; sequence GPEGSGKT.

It belongs to the thymidylate kinase family.

The enzyme catalyses dTMP + ATP = dTDP + ADP. Phosphorylation of dTMP to form dTDP in both de novo and salvage pathways of dTTP synthesis. In Staphylococcus haemolyticus (strain JCSC1435), this protein is Thymidylate kinase.